Consider the following 160-residue polypeptide: Lipoprotein signal peptidase (160 aa).

Helical transmembrane passes span 13-33 (IYITTIIFILILDISSKRLII), 72-92 (WFLSTVSMLTILVMTRIITKL), and 104-124 (SLIIAGATGNLIDRIFYGFVV). Active-site residues include Asp-125 and Asp-143. Residues 134-154 (WHFATFNIADCSIFIGIIILM) form a helical membrane-spanning segment.

This sequence belongs to the peptidase A8 family.

The protein localises to the cell inner membrane. It catalyses the reaction Release of signal peptides from bacterial membrane prolipoproteins. Hydrolyzes -Xaa-Yaa-Zaa-|-(S,diacylglyceryl)Cys-, in which Xaa is hydrophobic (preferably Leu), and Yaa (Ala or Ser) and Zaa (Gly or Ala) have small, neutral side chains.. The protein operates within protein modification; lipoprotein biosynthesis (signal peptide cleavage). Functionally, this protein specifically catalyzes the removal of signal peptides from prolipoproteins. This Buchnera aphidicola subsp. Acyrthosiphon pisum (strain 5A) protein is Lipoprotein signal peptidase.